The sequence spans 317 residues: 2,3-dihydroxyphenylpropionate/2,3-dihydroxicinnamic acid 1,2-dioxygenase (317 aa).

Catalysis depends on His115, which acts as the Proton donor. Catalysis depends on His179, which acts as the Proton acceptor.

The protein belongs to the LigB/MhpB extradiol dioxygenase family. In terms of assembly, homotetramer. Fe(2+) is required as a cofactor.

The enzyme catalyses 3-(2,3-dihydroxyphenyl)propanoate + O2 = (2Z,4E)-2-hydroxy-6-oxonona-2,4-dienedioate + H(+). It carries out the reaction (2E)-3-(2,3-dihydroxyphenyl)prop-2-enoate + O2 = (2Z,4E,7E)-2-hydroxy-6-oxonona-2,4,7-trienedioate + H(+). Its pathway is aromatic compound metabolism; 3-phenylpropanoate degradation. Its function is as follows. Catalyzes the non-heme iron(II)-dependent oxidative cleavage of 2,3-dihydroxyphenylpropionic acid and 2,3-dihydroxicinnamic acid into 2-hydroxy-6-ketononadienedioate and 2-hydroxy-6-ketononatrienedioate, respectively. The protein is 2,3-dihydroxyphenylpropionate/2,3-dihydroxicinnamic acid 1,2-dioxygenase of Burkholderia vietnamiensis (strain G4 / LMG 22486) (Burkholderia cepacia (strain R1808)).